Here is an 801-residue protein sequence, read N- to C-terminus: DNA mismatch repair protein MutS (801 aa).

590–597 (GPNMSGKS) provides a ligand contact to ATP.

It belongs to the DNA mismatch repair MutS family.

This protein is involved in the repair of mismatches in DNA. It is possible that it carries out the mismatch recognition step. This protein has a weak ATPase activity. This is DNA mismatch repair protein MutS from Thermotoga neapolitana (strain ATCC 49049 / DSM 4359 / NBRC 107923 / NS-E).